The sequence spans 217 residues: Uridylate kinase (217 aa).

6–10 serves as a coordination point for ATP; the sequence is KLSGR. Gly38 provides a ligand contact to UMP. Positions 39 and 43 each coordinate ATP. UMP contacts are provided by residues Asp60 and 107–113; that span reads FQPGQST. Residues Asn134, Tyr139, and Asp142 each contribute to the ATP site.

Belongs to the UMP kinase family. As to quaternary structure, homohexamer.

It is found in the cytoplasm. It carries out the reaction UMP + ATP = UDP + ADP. Its pathway is pyrimidine metabolism; CTP biosynthesis via de novo pathway; UDP from UMP (UMPK route): step 1/1. Its activity is regulated as follows. Inhibited by UTP. Catalyzes the reversible phosphorylation of UMP to UDP. In Pyrobaculum islandicum (strain DSM 4184 / JCM 9189 / GEO3), this protein is Uridylate kinase.